A 441-amino-acid chain; its full sequence is Ribosomal protein uS12 methylthiotransferase RimO (441 aa).

The MTTase N-terminal domain occupies 7–117 (PKISFVSLGC…VLDAVHRAKP (111 aa)). [4Fe-4S] cluster contacts are provided by C16, C52, C81, C148, C152, and C155. The 238-residue stretch at 134–371 (LTPRHYAYLK…MARQQAISAR (238 aa)) folds into the Radical SAM core domain. The TRAM domain maps to 374-440 (KRKVGTRQQI…AYDLHGTVAG (67 aa)).

This sequence belongs to the methylthiotransferase family. RimO subfamily. Requires [4Fe-4S] cluster as cofactor.

It is found in the cytoplasm. The catalysed reaction is L-aspartate(89)-[ribosomal protein uS12]-hydrogen + (sulfur carrier)-SH + AH2 + 2 S-adenosyl-L-methionine = 3-methylsulfanyl-L-aspartate(89)-[ribosomal protein uS12]-hydrogen + (sulfur carrier)-H + 5'-deoxyadenosine + L-methionine + A + S-adenosyl-L-homocysteine + 2 H(+). Functionally, catalyzes the methylthiolation of an aspartic acid residue of ribosomal protein uS12. In Rhodopseudomonas palustris (strain HaA2), this protein is Ribosomal protein uS12 methylthiotransferase RimO.